The sequence spans 215 residues: Pentapeptide repeat protein QnrB4 (215 aa).

Pentapeptide repeat domains are found at residues 25 to 104 (TFFN…SFMN) and 117 to 191 (ITNT…RGVD).

It belongs to the pentapeptide repeat protein family.

Probably plays a role in resistance to quinolone antibiotics. Only inhibits ATP-dependent DNA supercoiling by E.coli gyrase at high concentration (30 uM). Protects E.coli gyrase supercoiling activity from inhibition by fluoroquinolones (ciprofloxacin) at 0.1 uM, does not protect M.tuberculosis gyrase activity. In Escherichia coli, this protein is Pentapeptide repeat protein QnrB4.